We begin with the raw amino-acid sequence, 375 residues long: Chaperone protein DnaJ (375 aa).

In terms of domain architecture, J spans 5–69 (DYYEVLGVSK…QKRAQYDQFG (65 aa)). Residues 132–214 (GKETIIEIPR…CGGTGKVKKR (83 aa)) form a CR-type zinc finger. C145, C148, C162, C165, C188, C191, C202, and C205 together coordinate Zn(2+). CXXCXGXG motif repeat units lie at residues 145–152 (CETCKGSG), 162–169 (CSHCGGSG), 188–195 (CHHCEGTG), and 202–209 (CSDCGGTG).

It belongs to the DnaJ family. As to quaternary structure, homodimer. Zn(2+) serves as cofactor.

It is found in the cytoplasm. Its function is as follows. Participates actively in the response to hyperosmotic and heat shock by preventing the aggregation of stress-denatured proteins and by disaggregating proteins, also in an autonomous, DnaK-independent fashion. Unfolded proteins bind initially to DnaJ; upon interaction with the DnaJ-bound protein, DnaK hydrolyzes its bound ATP, resulting in the formation of a stable complex. GrpE releases ADP from DnaK; ATP binding to DnaK triggers the release of the substrate protein, thus completing the reaction cycle. Several rounds of ATP-dependent interactions between DnaJ, DnaK and GrpE are required for fully efficient folding. Also involved, together with DnaK and GrpE, in the DNA replication of plasmids through activation of initiation proteins. This Bacillus velezensis (strain DSM 23117 / BGSC 10A6 / LMG 26770 / FZB42) (Bacillus amyloliquefaciens subsp. plantarum) protein is Chaperone protein DnaJ.